The sequence spans 519 residues: Apolipoprotein N-acyltransferase (519 aa).

The next 6 membrane-spanning stretches (helical) occupy residues 6–26 (APLG…IWIF), 47–67 (LTAI…ITGV), 83–103 (IAAF…FVWL), 126–146 (LFIL…SHSI), 174–194 (LLSA…IDFL), and 206–226 (WHYF…GWLL). Positions 244-482 (IQGNIPNQIK…YEIHAAPIYR (239 aa)) constitute a CN hydrolase domain. The active-site Proton acceptor is the Glu285. Lys343 is an active-site residue. Residue Cys394 is the Nucleophile of the active site. The chain crosses the membrane as a helical span at residues 496-516 (VVFLLLVVSAIAWLYQIVFPL).

The protein belongs to the CN hydrolase family. Apolipoprotein N-acyltransferase subfamily.

It is found in the cell inner membrane. It catalyses the reaction N-terminal S-1,2-diacyl-sn-glyceryl-L-cysteinyl-[lipoprotein] + a glycerophospholipid = N-acyl-S-1,2-diacyl-sn-glyceryl-L-cysteinyl-[lipoprotein] + a 2-acyl-sn-glycero-3-phospholipid + H(+). It participates in protein modification; lipoprotein biosynthesis (N-acyl transfer). Its function is as follows. Catalyzes the phospholipid dependent N-acylation of the N-terminal cysteine of apolipoprotein, the last step in lipoprotein maturation. The polypeptide is Apolipoprotein N-acyltransferase (Synechocystis sp. (strain ATCC 27184 / PCC 6803 / Kazusa)).